The chain runs to 353 residues: tRNA-specific 2-thiouridylase MnmA (353 aa).

Residues 6-13 and Leu32 each bind ATP; that span reads GMSGGVDS. The active-site Nucleophile is the Cys99. An intrachain disulfide couples Cys99 to Cys197. Gly124 contributes to the ATP binding site. Positions 147–149 are interaction with tRNA; it reads KDQ. Cys197 functions as the Cysteine persulfide intermediate in the catalytic mechanism. The interaction with tRNA stretch occupies residues 303 to 304; the sequence is RY.

The protein belongs to the MnmA/TRMU family.

The protein resides in the cytoplasm. The enzyme catalyses S-sulfanyl-L-cysteinyl-[protein] + uridine(34) in tRNA + AH2 + ATP = 2-thiouridine(34) in tRNA + L-cysteinyl-[protein] + A + AMP + diphosphate + H(+). Functionally, catalyzes the 2-thiolation of uridine at the wobble position (U34) of tRNA, leading to the formation of s(2)U34. This chain is tRNA-specific 2-thiouridylase MnmA, found in Persephonella marina (strain DSM 14350 / EX-H1).